The following is a 149-amino-acid chain: Calmodulin (149 aa).

A2 bears the N-acetylalanine mark. EF-hand domains lie at 8 to 43 (EQIA…LGQN), 44 to 79 (PTEA…KMKD), 81 to 116 (DTEE…LGEK), and 117 to 149 (LTDE…MMAK). Positions 21, 23, 25, 27, 32, 57, 59, 61, 63, 68, 94, 96, 98, and 105 each coordinate Ca(2+). Position 116 is an N6,N6,N6-trimethyllysine (K116). Ca(2+) contacts are provided by D130, D132, D134, Q136, and E141.

The protein belongs to the calmodulin family.

Calmodulin mediates the control of a large number of enzymes, ion channels and other proteins by Ca(2+). Among the enzymes to be stimulated by the calmodulin-Ca(2+) complex are a number of protein kinases and phosphatases. In Karlodinium veneficum (Dinoflagellate), this protein is Calmodulin.